Consider the following 676-residue polypeptide: SPARC-like protein 1 (676 aa).

A signal peptide spans 1-16 (MKTVLLLICLLGSAFT). The segment covering 35–44 (EKHKYTHSEM) has biased composition (basic and acidic residues). Disordered regions lie at residues 35-151 (EKHK…WALR), 173-369 (NTVG…GVYR), and 385-437 (SEDN…RNST). Over residues 95-108 (KNSLRSINFLTLHS) the composition is skewed to polar residues. An N-linked (GlcNAc...) asparagine glycan is attached at Asn-182. Over residues 184 to 202 (SEEEEAGEEEDEEWGEETD) the composition is skewed to acidic residues. 2 stretches are compositionally biased toward basic and acidic residues: residues 249–266 (EKFS…KEGK) and 273–291 (NHNE…KEHF). Positions 312-328 (NAEEDDNDSGDDGEEDL) are enriched in acidic residues. Asn-318 is a glycosylation site (N-linked (GlcNAc...) asparagine). Basic and acidic residues predominate over residues 385–394 (SEDNHYHHEP). Asn-396 carries an N-linked (GlcNAc...) asparagine glycan. A compositionally biased stretch (low complexity) spans 397–408 (SSSKQQLQTSSS). Residue Asn-413 is glycosylated (N-linked (GlcNAc...) asparagine). A compositionally biased stretch (basic and acidic residues) spans 415 to 433 (TEHEDEVKTTGGSYHEESA). Asn-435 carries an N-linked (GlcNAc...) asparagine glycan. A Follistatin-like domain is found at 444 to 466 (LCRNFHCKRGKVCQADKQGKPSC). Cystine bridges form between Cys-445/Cys-456, Cys-450/Cys-466, Cys-468/Cys-502, Cys-474/Cys-495, Cys-484/Cys-521, Cys-527/Cys-638, and Cys-646/Cys-662. In terms of domain architecture, Kazal-like spans 462 to 523 (GKPSCICQDP…HLDYMGACKH (62 aa)). The N-linked (GlcNAc...) asparagine glycan is linked to Asn-488. Residues 634–669 (PMEHCITRFFQECDGDQDKLITLKEWCHCFAIKEED) form the EF-hand domain. Asp-647, Asp-649, Asp-651, and Glu-658 together coordinate Ca(2+).

The protein belongs to the SPARC family. In terms of tissue distribution, glial (Mueller) cells of the neuroretina.

It is found in the secreted. It localises to the extracellular space. Its subcellular location is the extracellular matrix. Functionally, could play a role in the late stage of neuroretina morphogenesis. The protein is SPARC-like protein 1 (SPARCL1) of Coturnix japonica (Japanese quail).